Reading from the N-terminus, the 339-residue chain is Ribosomal RNA small subunit methyltransferase H (339 aa).

S-adenosyl-L-methionine is bound by residues 52 to 54 (GGH), D71, F98, D130, and Q137.

Belongs to the methyltransferase superfamily. RsmH family.

It is found in the cytoplasm. The catalysed reaction is cytidine(1402) in 16S rRNA + S-adenosyl-L-methionine = N(4)-methylcytidine(1402) in 16S rRNA + S-adenosyl-L-homocysteine + H(+). Its function is as follows. Specifically methylates the N4 position of cytidine in position 1402 (C1402) of 16S rRNA. This chain is Ribosomal RNA small subunit methyltransferase H, found in Corynebacterium diphtheriae (strain ATCC 700971 / NCTC 13129 / Biotype gravis).